A 478-amino-acid chain; its full sequence is Methionine aminopeptidase 2 (478 aa).

Residues 1-123 (MAGVEEASSF…DPPSVPICDL (123 aa)) form a disordered region. A2 carries the post-translational modification N-acetylalanine. Residues 36 to 46 (KKKRRKKKKGK) are compositionally biased toward basic residues. Positions 55 to 79 (ELDKESGTSVDEVAKQLERQALEEK) are enriched in basic and acidic residues. Residues S60 and S63 each carry the phosphoserine; alternate modification. Residues S60 and S63 are each glycosylated (O-linked (GlcNAc) serine; alternate). Residues 80–92 (EKDDDDEDGDGDG) show a composition bias toward acidic residues. The span at 97–109 (GKKKKKKKKKRGP) shows a compositional bias: basic residues. H231 lines the substrate pocket. A divalent metal cation contacts are provided by D251, D262, and H331. H339 provides a ligand contact to substrate. A divalent metal cation-binding residues include E364 and E459.

The protein belongs to the peptidase M24A family. Methionine aminopeptidase eukaryotic type 2 subfamily. Binds EIF2S1 at low magnesium concentrations. Interacts strongly with the eIF-2 gamma-subunit EIF2S3. It depends on Co(2+) as a cofactor. Requires Zn(2+) as cofactor. Mn(2+) serves as cofactor. Fe(2+) is required as a cofactor. O-glycosylated; contains 12 O-linked GlcNAc. In terms of processing, contains approximately 12 O-linked N-acetylglucosamine (GlcNAc) residues. O-glycosylation is required for EIF2S1 binding.

The protein localises to the cytoplasm. The catalysed reaction is Release of N-terminal amino acids, preferentially methionine, from peptides and arylamides.. Cotranslationally removes the N-terminal methionine from nascent proteins. The N-terminal methionine is often cleaved when the second residue in the primary sequence is small and uncharged (Met-Ala-, Cys, Gly, Pro, Ser, Thr, or Val). Functionally, protects eukaryotic initiation factor EIF2S1 from translation-inhibiting phosphorylation by inhibitory kinases such as EIF2AK2/PKR and EIF2AK1/HCR. Plays a critical role in the regulation of protein synthesis. In Rattus norvegicus (Rat), this protein is Methionine aminopeptidase 2 (Metap2).